The chain runs to 388 residues: RNA binding motif protein, X-linked-like-1 (388 aa).

The 79-residue stretch at 8-86 (GKLFIGGLNT…KAIKVEQATK (79 aa)) folds into the RRM domain. Positions 61 to 80 (DAKDVARDMNGKSLDGKAIK) are enriched in basic and acidic residues. Residues 61–388 (DAKDVARDMN…SDRGGGQKQI (328 aa)) are disordered. Lys-80 participates in a covalent cross-link: Glycyl lysine isopeptide (Lys-Gly) (interchain with G-Cter in SUMO2). Residue Ser-88 is modified to Phosphoserine. Pro residues predominate over residues 148–161 (RGPPPRSGGPPPKR). Composition is skewed to basic and acidic residues over residues 191-212 (PRRE…DGYS) and 238-271 (YTYR…EYSD). The span at 320–332 (SRDSYSSSRSDLY) shows a compositional bias: low complexity. 2 stretches are compositionally biased toward basic and acidic residues: residues 333–344 (SSDRDRVGRQER) and 377–388 (SRSDRGGGQKQI).

The protein resides in the nucleus. Its function is as follows. RNA-binding protein which may be involved in pre-mRNA splicing. The polypeptide is RNA binding motif protein, X-linked-like-1 (Rbmxl1) (Rattus norvegicus (Rat)).